A 104-amino-acid polypeptide reads, in one-letter code: Circadian clock oscillator protein KaiB (104 aa).

The protein belongs to the KaiB family. The KaiABC complex composition changes during the circadian cycle to control KaiC phosphorylation. Complexes KaiC(6), KaiA(2-4):KaiC(6), KaiB(6):KaiC(6) and KaiC(6):KaiB(6):KaiA(12) are among the most important forms, many form cooperatively. Undergoes a major conformational rearrangment; in the free state forms homotetramers as a dimer of dimers. When bound to the CI domain of KaiC switches to a monomeric thioredoxin-fold (KaiB(fs)). KaiB(fs) binds CikA, leading it to dephosphorylate phospho-RpaA.

Its function is as follows. Key component of the KaiABC oscillator complex, which constitutes the main circadian regulator in cyanobacteria. Complex composition changes during the circadian cycle to control KaiC phosphorylation. KaiA stimulates KaiC autophosphorylation, while KaiB sequesters KaiA, leading to KaiC autodephosphorylation. Phospho-Ser-431 KaiC accumulation triggers binding of KaiB to form the KaiB(6):KaiC(6) complex, leading to changes in output regulators CikA and SasA. KaiB switches to a thioredoxin-like fold (KaiB(fs)) when bound to KaiC. KaiB(6):KaiC(6) formation exposes a site for KaiA binding that sequesters KaiA from KaiC, making the KaiC(6):KaiB(6):KaiA(12) complex that results in KaiC autodephosphorylation. In terms of biological role, a metamorphic protein which reversibly switches between an inactive tetrameric fold and a rare, thioredoxin-like monomeric fold (KaiB(fs)). KaiB(fs) binds phospho-KaiC, KaiA and CikA. KaiA and CikA compete for binding to KaiB(fs), and KaiB(fs) and SasA compete for binding to KaiC, thus the clock oscillator and output signal pathway are tightly coupled. In Trichodesmium erythraeum (strain IMS101), this protein is Circadian clock oscillator protein KaiB.